The primary structure comprises 124 residues: Fluoride-specific ion channel FluC (124 aa).

The next 4 helical transmembrane spans lie at 4-24, 35-55, 62-82, and 95-115; these read VLFVALGGSIGAVLRYLISLL, FGTLVVNILGSFLMGVIFALG, PEIKAFIGVGMLGALTTFSTF, and LVKAVLNVVVNVGVCIFVVYL. 2 residues coordinate Na(+): Gly74 and Thr77.

It belongs to the fluoride channel Fluc/FEX (TC 1.A.43) family.

It localises to the cell inner membrane. It carries out the reaction fluoride(in) = fluoride(out). Na(+) is not transported, but it plays an essential structural role and its presence is essential for fluoride channel function. Fluoride-specific ion channel. Important for reducing fluoride concentration in the cell, thus reducing its toxicity. This chain is Fluoride-specific ion channel FluC, found in Shewanella halifaxensis (strain HAW-EB4).